Consider the following 332-residue polypeptide: C4-dicarboxylate-binding periplasmic protein DctP (332 aa).

The signal sequence occupies residues 1–22 (MFKPLTLIAASILAVTSFNAAA).

The protein belongs to the bacterial solute-binding protein 7 family. As to quaternary structure, the complex comprises the extracytoplasmic solute receptor protein DctP, and the two transmembrane proteins DctQ and DctM.

The protein resides in the periplasm. Functionally, part of the tripartite ATP-independent periplasmic (TRAP) transport system DctPQM involved in C4-dicarboxylates uptake. This Vibrio cholerae serotype O1 (strain ATCC 39315 / El Tor Inaba N16961) protein is C4-dicarboxylate-binding periplasmic protein DctP.